We begin with the raw amino-acid sequence, 282 residues long: Insulin-like growth factor-binding protein 7 (282 aa).

An N-terminal signal peptide occupies residues 1-26; that stretch reads MERPSLRALLLGAAGLLLLLLPLSSS. Residues 28 to 114 enclose the IGFBP N-terminal domain; it reads SSDTCGPCEP…PGVSGVCVCK (87 aa). 7 disulfide bridges follow: Cys32–Cys57, Cys35–Cys59, Cys40–Cys60, Cys48–Cys63, Cys71–Cys87, Cys81–Cys111, and Cys120–Cys156. The Kazal-like domain maps to 105–158; it reads PGVSGVCVCKSRYPVCGSDGTTYPSGCQLRAASQRAESRGEKAITQVSKGTCEQ. Residues 160 to 264 form the Ig-like C2-type domain; that stretch reads PSIVTPPKDI…GQASASAKIT (105 aa). Asn171 is a glycosylation site (N-linked (GlcNAc...) asparagine). Cys181 and Cys248 form a disulfide bridge. Ser239 is subject to Phosphoserine; by FAM20C.

As to quaternary structure, may interact with VPS24/CHMP3; the relevance of such interaction however remains unclear. Interacts with CD93; this interaction plays a role in endothelial cells angiogenesis. In terms of processing, N-glycosylated.

The protein resides in the secreted. Binds IGF1 and IGF2 with a relatively low affinity. Stimulates prostacyclin (PGI2) production. Stimulates cell adhesion. Acts as a ligand for CD93 to play a role in angiogenesis. The chain is Insulin-like growth factor-binding protein 7 (IGFBP7) from Homo sapiens (Human).